The following is a 276-amino-acid chain: Acyl-[acyl-carrier-protein]--UDP-N-acetylglucosamine O-acyltransferase (276 aa).

Belongs to the transferase hexapeptide repeat family. LpxA subfamily. Homotrimer.

The protein localises to the cytoplasm. It catalyses the reaction a (3R)-hydroxyacyl-[ACP] + UDP-N-acetyl-alpha-D-glucosamine = a UDP-3-O-[(3R)-3-hydroxyacyl]-N-acetyl-alpha-D-glucosamine + holo-[ACP]. It participates in glycolipid biosynthesis; lipid IV(A) biosynthesis; lipid IV(A) from (3R)-3-hydroxytetradecanoyl-[acyl-carrier-protein] and UDP-N-acetyl-alpha-D-glucosamine: step 1/6. In terms of biological role, involved in the biosynthesis of lipid A, a phosphorylated glycolipid that anchors the lipopolysaccharide to the outer membrane of the cell. This chain is Acyl-[acyl-carrier-protein]--UDP-N-acetylglucosamine O-acyltransferase, found in Synechocystis sp. (strain ATCC 27184 / PCC 6803 / Kazusa).